A 246-amino-acid polypeptide reads, in one-letter code: Probable transcriptional regulatory protein Rmag_0394 (246 aa).

This sequence belongs to the TACO1 family.

The protein resides in the cytoplasm. This Ruthia magnifica subsp. Calyptogena magnifica protein is Probable transcriptional regulatory protein Rmag_0394.